The sequence spans 985 residues: MATSVIQFGSFVCNLPKSQPLCTTVHCPKQSMSTNIVRPSDPFAELEKHLEPYLQKRMDATIRQTKGGTLVYKHMSEAKRARKLRKKQREEEEVRLFMNAAPYIVSNITIGGGEVPSKMEEVSIKRPLNKTPSRKIKKSLTPVTFRDGHMNKFLRELRDCATRNSMTVHLIGKRKTELAFKRRASLNAVYATLHHMRGVDRKRDIVLEEWMNDYVLNLSKVSTWGSLFHAESLKRGDSGLILNARALRGKFGRCSRGFFIVRGKSDGVVLDARSKLSMATVTHMEQYSTPEAFWSGLEKKWSVVRKPTAHTCKPTYSVSNCGEVAAIIAQALFPCHKLTCGECSKEICDLTSNECVQELYKNTSLALERMNNLHPEFQHIVKVLSVVRQLTEASNHGTETFDEIFKMIGSKTQSPFTHLNKLNEFMLKGNENTSGEWLTARQHLRELVRFQKNRTDNIKKGDLASFRNKLSARAQYNLYLSCDNQLDKNASFLWGQREYHARRFFLNFFQQIDPSKGYLAYEDRTIPNGSRKLAIGNLIVPLDLAEFRKRMNGIDTQQPPIGKYCTSQLDGNFVYPCCCTTLDDGQPIRSAVYAPTKKHLVVGNTGDTKYINLPKGDTEMLYIALDGYCYINIYLAMLVNISEEEAKDFTKKVRDIFMPKLGKWPTLMDLATTCAQLRIFHPDVHDAELPRILVDHNTQTCHVVDSYGSISTGYHILKAATVSQLVLFADDNLESEIKHYRVGGIVENHKVQIDNQPSRCGVSEFHAIRMLIKGIYRPSVMYELLSEEPYLLVFSILSPSILIAMYNDRAFELAVQIWLEKEQSIPLIATILTNLAAKVSVATTLVQQLQLIELSADQLLNVTCDGFRVSFAYQSALTLLTRMRDQAKANSELISGGFNEYDQDLAWTLEKKLSRPLTRPMERIKLAGKISLLLVLKKAKDSFAVKYQKQKFARCQRNIQFITETIYGKGFLPHESRSSVHQARN.

Residues 144 to 287 enclose the Peptidase S30 domain; the sequence is TFRDGHMNKF…MATVTHMEQY (144 aa). Active-site for P1 proteinase activity residues include His195, Asp204, and Ser238. The Involved in interaction with stylet and aphid transmission motif lies at 337–340; the sequence is KLTC. Residues 595–597 carry the Involved in virions binding and aphid transmission motif; that stretch reads PTK. Residues 621–743 enclose the Peptidase C6 domain; sequence LYIALDGYCY…ESEIKHYRVG (123 aa). Catalysis depends on for helper component proteinase activity residues Cys629 and His702.

This sequence belongs to the potyviridae P3N-PIPO polyprotein family. As to quaternary structure, interacts (via PIPO domain) with host PCaP1 protein; this interaction may help to anchor the movement complex to the plasma membrane from which the complex could move to the plasmodesmata. Potyviral RNA is expressed as two polyproteins which undergo post-translational proteolytic processing. Genome polyprotein is processed by NIa-pro, P1 and HC-pro proteinases resulting in the production of at least ten individual proteins. P3N-PIPO is cleaved by P1 and HC-pro proteinases resulting in the production of three individual proteins. The P1 proteinase and the HC-pro cleave only their respective C-termini autocatalytically.

It localises to the host cell junction. Its subcellular location is the host plasmodesma. The enzyme catalyses Hydrolyzes a Gly-|-Gly bond at its own C-terminus, commonly in the sequence -Tyr-Xaa-Val-Gly-|-Gly, in the processing of the potyviral polyprotein.. Functionally, required for aphid transmission and also has proteolytic activity. Only cleaves a Gly-Gly dipeptide at its own C-terminus. Interacts with virions and aphid stylets. Acts as a suppressor of RNA-mediated gene silencing, also known as post-transcriptional gene silencing (PTGS), a mechanism of plant viral defense that limits the accumulation of viral RNAs. May have RNA-binding activity. Its function is as follows. Allows efficient cell to cell propagation, by bypassing the host cell wall barrier. Transports viral genome to neighboring plant cells directly through plasmosdesmata, without any budding. The chain is P3N-PIPO polyprotein from Pepper mottle virus (isolate California) (PeMV).